The sequence spans 338 residues: L-lysine 2,3-aminomutase (338 aa).

The 224-residue stretch at 107-330 (HKYRNRLLFM…PKLAREIAGE (224 aa)) folds into the Radical SAM core domain. 3 residues coordinate [4Fe-4S] cluster: Cys-121, Cys-125, and Cys-128. Lys-333 is modified (N6-(pyridoxal phosphate)lysine).

This sequence belongs to the radical SAM superfamily. KamA family. Requires [4Fe-4S] cluster as cofactor. It depends on pyridoxal 5'-phosphate as a cofactor.

It catalyses the reaction L-lysine = D-beta-lysine. In terms of biological role, with EpmA is involved in the beta-lysylation step of the post-translational modification of translation elongation factor P (EF-P) on 'Lys-34'. EpmB appears to act before EpmA. Displays lysine 2,3-aminomutase activity, producing (R)-beta-lysine from (S)-alpha-lysine (L-lysine). The protein is L-lysine 2,3-aminomutase (epmB) of Haemophilus influenzae (strain ATCC 51907 / DSM 11121 / KW20 / Rd).